A 262-amino-acid chain; its full sequence is [LysW]-aminoadipate/[LysW]-glutamate kinase (262 aa).

Substrate contacts are provided by residues 35-36 (GG), R62, and N167.

This sequence belongs to the acetylglutamate kinase family. LysZ subfamily.

The protein localises to the cytoplasm. The catalysed reaction is [amino-group carrier protein]-C-terminal-N-(1,4-dicarboxybutan-1-yl)-L-glutamine + ATP = [amino-group carrier protein]-C-terminal-N-(1-carboxy-5-phosphooxy-5-oxopentan-1-yl)-L-glutamine + ADP. It catalyses the reaction [amino-group carrier protein]-C-terminal-gamma-(L-glutamyl)-L-glutamate + ATP = [amino-group carrier protein]-C-terminal-gamma-(5-phospho-L-glutamyl)-L-glutamate + ADP. The protein operates within amino-acid biosynthesis; L-lysine biosynthesis via AAA pathway; L-lysine from L-alpha-aminoadipate (Thermus route): step 2/5. Its pathway is amino-acid biosynthesis; L-arginine biosynthesis. Involved in both the arginine and lysine biosynthetic pathways. Phosphorylates the LysW-bound precursors glutamate (for arginine biosynthesis), respectively alpha-aminoadipate (for lysine biosynthesis). The sequence is that of [LysW]-aminoadipate/[LysW]-glutamate kinase from Metallosphaera sedula (strain ATCC 51363 / DSM 5348 / JCM 9185 / NBRC 15509 / TH2).